The following is a 1985-amino-acid chain: Non-reducing polyketide synthase ntnG (1985 aa).

The segment at 7–243 (LLFGDQADAP…TILPAFGAVH (237 aa)) is N-terminal acylcarrier protein transacylase (SAT) domain. The 429-residue stretch at 364-792 (SGSVAIIGMS…GGNSCFVLEE (429 aa)) folds into the Ketosynthase family 3 (KS3) domain. Active-site for beta-ketoacyl synthase activity residues include C536, H671, and H711. Residues 889 to 1148 (VFAFTGQGAH…VNFEQAISHC (260 aa)) form a malonyl-CoA:ACP transacylase (MAT) domain region. Catalysis depends on S980, which acts as the For acyl/malonyl transferase activity. Positions 1261 to 1392 (HRLVKQEDTA…VRLRDEHAFD (132 aa)) are N-terminal hotdog fold. The region spanning 1261 to 1567 (HRLVKQEDTA…FRKMPRTTLH (307 aa)) is the PKS/mFAS DH domain. A product template (PT) domain region spans residues 1265 to 1566 (KQEDTAKEQH…RFRKMPRTTL (302 aa)). Residue H1293 is the Proton acceptor; for dehydratase activity of the active site. The segment at 1414–1567 (AGGRANRFQG…FRKMPRTTLH (154 aa)) is C-terminal hotdog fold. Residue D1479 is the Proton donor; for dehydratase activity of the active site. The span at 1578–1605 (NTKQVPHPTTNGSAIANGVNRNPSHNEP) shows a compositional bias: polar residues. A disordered region spans residues 1578-1622 (NTKQVPHPTTNGSAIANGVNRNPSHNEPSTPPVANGVNGTNGDQS). Residues 1622-1699 (SDRKSLYSVL…DAQRELRRLE (78 aa)) enclose the Carrier domain. O-(pantetheine 4'-phosphoryl)serine is present on S1659. Positions 1719–1913 (TRECNVVLMQ…DCTFVIWAKK (195 aa)) are thioesterase (TE) domain.

It participates in secondary metabolite biosynthesis; terpenoid biosynthesis. Functionally, non-reducing polyketide synthase; part of the gene cluster that mediates the biosynthesis of the meroterpenoids nectripenoids A and B, as well as cochliquninone D and isocochliquninone E. The pathway probably begins with the HR-PKS ntnH that catalyzes two chain-extension steps to form a reduced triketide, which then primes the SAT domain in the NR-PKS ntnG to initiate three more cycles of extension to give a linear hexaketide corresponding to the polyketide part of nectripenoids. The FAD-dependent monooxygenase ntnJ then performs an oxidative decarboxylation at C11 of the ntnH/ntnG product, via an electrophilic aromatic hydroxylation with concomitant ipso-decarboxylation. The membrane-bound polyprenyl transferase ntnF then introduces a farnesyl group before the FAD-dependent monooxygenase ntnK functions as the first epoxidase on terminal C12'-C13' olefin, followed by a second epoxidation on C7'-C8' catalyzed by ntnA. The terpene cyclase/mutase ntnI then initiates the sequential tricyclic ring formation through protonation of the terminal epoxide and catalyzes the regioselective and stereoselective 6/6/6-tricyclic ring formation. The cytochrome P450 monooxygenase ntnM may then hydroxylate C1'. This Nectria sp protein is Non-reducing polyketide synthase ntnG.